The primary structure comprises 631 residues: Probable potassium transport system protein Kup (631 aa).

The next 12 membrane-spanning stretches (helical) occupy residues 17–37 (IGLL…SPLY), 56–76 (ILGV…FKYM), 109–129 (MMMV…SMIT), 147–167 (GLDH…FLIQ), 174–194 (IGVL…ALGV), 215–235 (FFII…LALT), 256–276 (WFIL…ALVL), 288–308 (LLAP…ATII), 346–366 (IYIG…VIGF), 378–398 (VAVT…MLML), 403–423 (PLLA…FFAA), and 428–448 (IFQG…LMTT).

It belongs to the HAK/KUP transporter (TC 2.A.72) family.

It localises to the cell inner membrane. It catalyses the reaction K(+)(in) + H(+)(in) = K(+)(out) + H(+)(out). Transport of potassium into the cell. Likely operates as a K(+):H(+) symporter. The sequence is that of Probable potassium transport system protein Kup from Pseudomonas savastanoi pv. phaseolicola (strain 1448A / Race 6) (Pseudomonas syringae pv. phaseolicola (strain 1448A / Race 6)).